Here is a 440-residue protein sequence, read N- to C-terminus: Protein EFFECTOR OF TRANSCRIPTION (440 aa).

The GIY-YIG domain maps to 131 to 167; it reads SIQGLGVAVNIHDADDISHGQTESIRTRLRSYGRPVP. Residues 172–216 form a disordered region; the sequence is LGDNASQTITQKKTGGRSKDKKHGFEEERDVSRVEAEENNTNSVH. Residues 175–184 show a composition bias toward polar residues; the sequence is NASQTITQKK. The segment covering 194–207 has biased composition (basic and acidic residues); that stretch reads HGFEEERDVSRVEA. Cx9Cx9RCx2HK repeat units lie at residues 247-272 and 295-320; these read CGVL…TEHK and CGVI…EDHK. Residues 339-363 are disordered; sequence ILKEDKSKPKTRTSSTNQEEPGESL. Cx9Cx9RCx2HK repeat units lie at residues 365–390 and 409–434; these read CEAT…WQHK and CGVK…QEHK.

Its subcellular location is the nucleus. Transcription regulator that negatively modulates gibberellin-mediated developmental processes. May act as transcriptional repressor of giberellin controlled genes. Binds DNA without sequence preference. This Brassica napus (Rape) protein is Protein EFFECTOR OF TRANSCRIPTION.